A 149-amino-acid chain; its full sequence is Large ribosomal subunit protein bL9 (149 aa).

The protein belongs to the bacterial ribosomal protein bL9 family.

Its function is as follows. Binds to the 23S rRNA. In Edwardsiella ictaluri (strain 93-146), this protein is Large ribosomal subunit protein bL9.